The sequence spans 448 residues: Zinc finger and BTB domain-containing protein 14 (448 aa).

The BTB domain maps to cysteine 36–lysine 102. The short motif at histidine 50–lysine 66 is the Nuclear localization signal element. Residues valine 130–threonine 193 are disordered. The segment covering aspartate 156–aspartate 167 has biased composition (acidic residues). C2H2-type zinc fingers lie at residues isoleucine 275 to proline 302, phenylalanine 303 to proline 330, tyrosine 331 to proline 358, phenylalanine 359 to proline 386, and phenylalanine 387 to glutamine 415. The span at arginine 404 to glutamine 415 shows a compositional bias: basic and acidic residues. A disordered region spans residues arginine 404–glutamate 425. Residues valine 416–glutamate 425 are compositionally biased toward polar residues.

This sequence belongs to the krueppel C2H2-type zinc-finger protein family. In terms of assembly, interacts with ZBTB21.

The protein localises to the nucleus. Its function is as follows. Transcriptional activator of the dopamine transporter (DAT), binding it's promoter at the consensus sequence 5'-CCTGCACAGTTCACGGA-3'. Binds to 5'-d(GCC)(n)-3' trinucleotide repeats in promoter regions and acts as a repressor of the FMR1 gene. Transcriptional repressor of MYC and thymidine kinase promoters. The sequence is that of Zinc finger and BTB domain-containing protein 14 (ZBTB14) from Gallus gallus (Chicken).